We begin with the raw amino-acid sequence, 555 residues long: E3 ubiquitin-protein ligase ARIH1 (555 aa).

The segment covering 1–47 has biased composition (acidic residues); that stretch reads MDSDEGYNYEFDEDEECSEEDSGAEEEEDEDDDEPDDDNLDLGEVEL. Residues 1–93 form a disordered region; the sequence is MDSDEGYNYE…GGGGGPGHEQ (93 aa). Over residues 65–90 the composition is skewed to gly residues; sequence ETGGGGGSALGPGGGGGGGGGGGGPG. The UBA-like stretch occupies residues 103-151; sequence TAEQILQHMVECIREVNEVIQNPATITRILLSHFNWDKEKLMERYFDGN. Position 140 is an N6-acetyllysine (lysine 140). The TRIAD supradomain stretch occupies residues 180–391; it reads QDMPCQICYL…SAWYNCNRYN (212 aa). Zn(2+) contacts are provided by cysteine 184, cysteine 187, cysteine 201, histidine 203, cysteine 206, cysteine 209, cysteine 229, cysteine 234, cysteine 274, cysteine 279, cysteine 295, cysteine 297, cysteine 302, cysteine 305, histidine 310, cysteine 315, cysteine 342, and cysteine 345. An RING-type 1 zinc finger spans residues 184-234; that stretch reads CQICYLNYPNSYFTGLECGHKFCMQCWSEYLTTKIMEEGMGQTISCPAHGC. Residues 254 to 315 form an IBR-type zinc finger; sequence LKYQHLITNS…GENWHDPVKC (62 aa). The segment at 342–373 adopts an RING-type 2; atypical zinc-finger fold; the sequence is CPKCHVTIEKDGGCNHMVCRNQNCKAEFCWVC. Cysteine 355 is an active-site residue. Cysteine 360, cysteine 365, cysteine 370, cysteine 373, histidine 380, and cysteine 387 together coordinate Zn(2+). The tract at residues 406 to 555 is ariadne domain; sequence RAALQRYLFY…EKDLWEYIED (150 aa).

Belongs to the RBR family. Ariadne subfamily. As to quaternary structure, interacts (via the first RING-type zinc finger) with UBE2L3. Associates with cullin-RING ubiquitin ligase (CRL) complexes containing CUL1, CUL2 and CUL3. Interacts with neddylated CUL1. Interacts with neddylated CUL2. Interacts with neddylated CUL3. Interacts with neddylated CUL4A.

It is found in the cytoplasm. Its subcellular location is the nucleus. The protein resides in the cajal body. The catalysed reaction is [E2 ubiquitin-conjugating enzyme]-S-ubiquitinyl-L-cysteine + [acceptor protein]-L-lysine = [E2 ubiquitin-conjugating enzyme]-L-cysteine + [acceptor protein]-N(6)-ubiquitinyl-L-lysine.. It functions in the pathway protein modification; protein ubiquitination. Its activity is regulated as follows. Autoinhibited by the ariadne domain, which masks the second RING-type zinc finger that contains the active site and inhibits the E3 activity. Inhibition is relieved upon binding to neddylated cullin-RING ubiquitin ligase complexes, which activate the E3 ligase activity of ARIH1. Its function is as follows. E3 ubiquitin-protein ligase, which catalyzes ubiquitination of target proteins together with ubiquitin-conjugating enzyme E2 UBE2L3. Acts as an atypical E3 ubiquitin-protein ligase by working together with cullin-RING ubiquitin ligase (CRL) complexes and initiating ubiquitination of CRL substrates: associates with CRL complexes and specifically mediates addition of the first ubiquitin on CRLs targets. The initial ubiquitin is then elongated by CDC34/UBE2R1 and UBE2R2. E3 ubiquitin-protein ligase activity is activated upon binding to neddylated cullin-RING ubiquitin ligase complexes. Plays a role in protein translation in response to DNA damage by mediating ubiquitination of EIF4E2, the consequences of EIF4E2 ubiquitination are however unclear. According to a report, EIF4E2 ubiquitination leads to promote EIF4E2 cap-binding and protein translation arrest. According to another report EIF4E2 ubiquitination leads to its subsequent degradation. Acts as the ligase involved in ISGylation of EIF4E2. In vitro, controls the degradation of the LINC (LInker of Nucleoskeleton and Cytoskeleton) complex member SUN2 and may therefore have a role in the formation and localization of the LINC complex, and as a consequence, may act in nuclear subcellular localization and nuclear morphology. The sequence is that of E3 ubiquitin-protein ligase ARIH1 (ARIH1) from Bos taurus (Bovine).